A 440-amino-acid polypeptide reads, in one-letter code: Ribosomal protein uS12 methylthiotransferase RimO (440 aa).

Positions 5-116 (PTIAISHLGC…IVNVIERAEQ (112 aa)) constitute an MTTase N-terminal domain. [4Fe-4S] cluster-binding residues include Cys-14, Cys-50, Cys-79, Cys-154, Cys-158, and Cys-161. A Radical SAM core domain is found at 140 to 370 (TTTEGVAYLR…ALQQPISWRK (231 aa)). The TRAM domain maps to 372-438 (QQEVGKTVEV…EYDLFGQVVS (67 aa)).

It belongs to the methylthiotransferase family. RimO subfamily. [4Fe-4S] cluster is required as a cofactor.

It is found in the cytoplasm. The enzyme catalyses L-aspartate(89)-[ribosomal protein uS12]-hydrogen + (sulfur carrier)-SH + AH2 + 2 S-adenosyl-L-methionine = 3-methylsulfanyl-L-aspartate(89)-[ribosomal protein uS12]-hydrogen + (sulfur carrier)-H + 5'-deoxyadenosine + L-methionine + A + S-adenosyl-L-homocysteine + 2 H(+). In terms of biological role, catalyzes the methylthiolation of an aspartic acid residue of ribosomal protein uS12. The sequence is that of Ribosomal protein uS12 methylthiotransferase RimO from Trichormus variabilis (strain ATCC 29413 / PCC 7937) (Anabaena variabilis).